Here is an 872-residue protein sequence, read N- to C-terminus: Alanine--tRNA ligase (872 aa).

4 residues coordinate Zn(2+): histidine 567, histidine 571, cysteine 669, and histidine 673.

The protein belongs to the class-II aminoacyl-tRNA synthetase family. It depends on Zn(2+) as a cofactor.

The protein localises to the cytoplasm. The enzyme catalyses tRNA(Ala) + L-alanine + ATP = L-alanyl-tRNA(Ala) + AMP + diphosphate. Catalyzes the attachment of alanine to tRNA(Ala) in a two-step reaction: alanine is first activated by ATP to form Ala-AMP and then transferred to the acceptor end of tRNA(Ala). Also edits incorrectly charged Ser-tRNA(Ala) and Gly-tRNA(Ala) via its editing domain. The sequence is that of Alanine--tRNA ligase from Streptococcus pyogenes serotype M2 (strain MGAS10270).